Consider the following 490-residue polypeptide: Cytochrome P450 monooxygenase aclL (490 aa).

A helical transmembrane segment spans residues 1 to 21 (MLFSLGPLTIVYGLVIFVVAK). N-linked (GlcNAc...) asparagine glycosylation occurs at asparagine 176. Position 434 (cysteine 434) interacts with heme.

This sequence belongs to the cytochrome P450 family. Heme serves as cofactor.

It is found in the membrane. Its pathway is mycotoxin biosynthesis. Cytochrome P450 monooxygenase; part of the gene cluster that mediates the biosynthesis of aspirochlorine (or antibiotic A30641), an unusual halogenated spiro compound with distinctive antifungal properties due to selective inhibition of protein biosynthesis, and which is also active against bacteria, viruses, and murine tumor cells. The non-ribosomal peptide synthetase (NRPS) aclP is responsible the formation of the diketopiperazine (DKP) core from the condensation of 2 phenylalanine residues. One Phe residue is tailored into chlorotyrosine by hydroxylation and chlorination, whereas the second Phe undergoes an unprecedented C-C bond cleavage to be converted into glycine. After formation of the DKP, sulfur is incorporated into the DKP by conjugation with glutathione by aclG, followed by its stepwise degradation to the thiol by aclI, aclJ and aclK, and the dithiol oxidation by aclT. In addition, oxygenases (aclB, aclC, aclL and aclO) and O-methyltransferases (aclM and aclU) act as tailoring enzymes to produce the intermediate dechloroaspirochlorine. Ultimately, chlorination of dechloroaspirochlorine by the halogenase aclH is the last step in the aspirochlorine pathway. The protein is Cytochrome P450 monooxygenase aclL of Aspergillus oryzae (strain ATCC 42149 / RIB 40) (Yellow koji mold).